We begin with the raw amino-acid sequence, 101 residues long: Ubiquitin-related modifier 1 homolog (101 aa).

G101 carries the 1-thioglycine modification. G101 is covalently cross-linked (Glycyl lysine isopeptide (Gly-Lys) (interchain with K-? in acceptor proteins)).

It belongs to the URM1 family. As to quaternary structure, interacts with cer. In terms of processing, C-terminal thiocarboxylation occurs in 2 steps, it is first acyl-adenylated (-COAMP) via the hesA/moeB/thiF part of the MOCS3 homolog, then thiocarboxylated (-COSH) via the rhodanese domain of the MOCS3 homolog.

It is found in the cytoplasm. It functions in the pathway tRNA modification; 5-methoxycarbonylmethyl-2-thiouridine-tRNA biosynthesis. Functionally, acts as a sulfur carrier required for 2-thiolation of mcm(5)S(2)U at tRNA wobble positions of cytosolic tRNA(Lys), tRNA(Glu) and tRNA(Gln). Serves as sulfur donor in tRNA 2-thiolation reaction by being thiocarboxylated (-COSH) at its C-terminus by MOCS3. The sulfur is then transferred to tRNA to form 2-thiolation of mcm(5)S(2)U. Also acts as a ubiquitin-like protein (UBL) that is covalently conjugated via an isopeptide bond to lysine residues of target proteins such as Prx2/Jafrac1, Ciao1, Eip71CD and GILT1. The thiocarboxylated form serves as substrate for conjugation and oxidative stress specifically induces the formation of UBL-protein conjugates. The polypeptide is Ubiquitin-related modifier 1 homolog (Drosophila simulans (Fruit fly)).